The primary structure comprises 1414 residues: DNA-directed RNA polymerase subunit beta' (1414 aa).

The Zn(2+) site is built by cysteine 72, cysteine 74, cysteine 87, and cysteine 90. Residues aspartate 463, aspartate 465, and aspartate 467 each contribute to the Mg(2+) site. Zn(2+) is bound by residues cysteine 811, cysteine 885, cysteine 892, and cysteine 895.

Belongs to the RNA polymerase beta' chain family. In terms of assembly, the RNAP catalytic core consists of 2 alpha, 1 beta, 1 beta' and 1 omega subunit. When a sigma factor is associated with the core the holoenzyme is formed, which can initiate transcription. Mg(2+) serves as cofactor. The cofactor is Zn(2+).

The catalysed reaction is RNA(n) + a ribonucleoside 5'-triphosphate = RNA(n+1) + diphosphate. DNA-dependent RNA polymerase catalyzes the transcription of DNA into RNA using the four ribonucleoside triphosphates as substrates. This is DNA-directed RNA polymerase subunit beta' from Roseobacter denitrificans (strain ATCC 33942 / OCh 114) (Erythrobacter sp. (strain OCh 114)).